A 478-amino-acid polypeptide reads, in one-letter code: Zinc metalloproteinase/disintegrin VMP-II (478 aa).

Positions 1-20 (MIQVLLVTICLAVFPYQGSS) are cleaved as a signal peptide. Residues 21–190 (IILESGNVND…KASQLNLTPE (170 aa)) constitute a propeptide that is removed on maturation. The region spanning 197–393 (RYIELVIVAD…HNPQCMLNEP (197 aa)) is the Peptidase M12B domain. 2 residues coordinate Ca(2+): glutamate 200 and aspartate 284. 3 disulfides stabilise this stretch: cysteine 308-cysteine 388, cysteine 348-cysteine 372, and cysteine 350-cysteine 355. Histidine 333 contributes to the Zn(2+) binding site. Glutamate 334 is a catalytic residue. 2 residues coordinate Zn(2+): histidine 337 and histidine 343. Ca(2+) is bound by residues cysteine 388 and asparagine 391. Residues 394 to 405 (LGTDTVSRNELL) constitute a propeptide that is removed on maturation. One can recognise a Disintegrin domain in the interval 414–478 (GSPANPCCDA…ADCPRNRFHA (65 aa)). Intrachain disulfides connect cysteine 420-cysteine 443, cysteine 434-cysteine 440, cysteine 439-cysteine 464, and cysteine 452-cysteine 471. Residues 456–458 (RGD) carry the Cell attachment site motif.

The protein belongs to the venom metalloproteinase (M12B) family. P-II subfamily. P-IIe sub-subfamily. As to quaternary structure, heterodimer; disulfide-linked (disintegrin). The cofactor is Zn(2+). As to expression, expressed by the venom gland.

The protein localises to the secreted. In terms of biological role, impairs hemostasis in the envenomed animal. Functionally, this recombinant protein inhibits ADP-induced platelet aggregation in whole human blood and this effect is concentration-dependent with an IC(50) of 34 nM. The polypeptide is Zinc metalloproteinase/disintegrin VMP-II (Crotalus viridis viridis (Prairie rattlesnake)).